The sequence spans 364 residues: Protein trichome birefringence-like 40 (364 aa).

A helical; Signal-anchor for type II membrane protein membrane pass occupies residues 9–25 (LASLSLILFSSFPGLLA). The short motif at 118–120 (GDS) is the GDS motif element. The DCXHWCLPGXXDXWN motif signature appears at 341–355 (DCSHWCLPGLPDTWN).

It belongs to the PC-esterase family. TBL subfamily.

Its subcellular location is the membrane. May act as a bridging protein that binds pectin and other cell wall polysaccharides. Probably involved in maintaining esterification of pectins. May be involved in the specific O-acetylation of cell wall polymers. This Arabidopsis thaliana (Mouse-ear cress) protein is Protein trichome birefringence-like 40 (TBL40).